A 221-amino-acid polypeptide reads, in one-letter code: 2-amino-5-formylamino-6-ribosylaminopyrimidin-4(3H)-one 5'-monophosphate deformylase (221 aa).

Fe cation-binding residues include E29, H31, D40, and H108.

This sequence belongs to the creatininase superfamily. FAPy deformylase family. In terms of assembly, homodimer. Fe(2+) serves as cofactor. Requires Zn(2+) as cofactor.

The enzyme catalyses 2-amino-5-formylamino-6-(5-phospho-D-ribosylamino)pyrimidin-4(3H)-one + H2O = 2,5-diamino-6-(1-D-ribosylamino)pyrimidin-4(3H)-one 5'-phosphate + formate + H(+). Its pathway is cofactor biosynthesis; coenzyme F420 biosynthesis. It participates in cofactor biosynthesis; riboflavin biosynthesis. Functionally, catalyzes the hydrolysis of the formamide of 2-amino-5-formylamino-6-ribosylamino-4(3H)-pyrimidinone 5'-monophosphate (FAPy) to form 2,5-diamino-6-ribosylamino-4(3H)-pyrimidinone 5'-phosphate (APy). The chain is 2-amino-5-formylamino-6-ribosylaminopyrimidin-4(3H)-one 5'-monophosphate deformylase from Methanococcus maripaludis (strain DSM 14266 / JCM 13030 / NBRC 101832 / S2 / LL).